A 158-amino-acid polypeptide reads, in one-letter code: Ribonuclease H (158 aa).

The 142-residue stretch at 3 to 144 (ELKLIHIFTD…CDQLARAAAE (142 aa)) folds into the RNase H type-1 domain. Mg(2+)-binding residues include Asp-12, Glu-50, Asp-72, and Asp-136.

Belongs to the RNase H family. In terms of assembly, monomer. Mg(2+) is required as a cofactor.

It localises to the cytoplasm. The enzyme catalyses Endonucleolytic cleavage to 5'-phosphomonoester.. Endonuclease that specifically degrades the RNA of RNA-DNA hybrids. The protein is Ribonuclease H of Shewanella sp. (strain MR-4).